Here is a 277-residue protein sequence, read N- to C-terminus: Anamorsin homolog (277 aa).

The interval 1-160 (MDTKRMLQNS…NIGSSFALKK (160 aa)) is N-terminal SAM-like domain. Residues 161-188 (SIKSPVKVQNDDYSDLIDEDSLLTEEDL) are linker. Residues C199, C208, C211, and C213 each contribute to the [2Fe-2S] cluster site. The fe-S binding site A stretch occupies residues 199–213 (CEVGSTRKACKNCTC). Residues C238, C241, C249, and C252 each coordinate [4Fe-4S] cluster. Short sequence motifs (cx2C motif) lie at residues 238-241 (CGSC) and 249-252 (CGTC). The interval 238-252 (CGSCGLGDAFRCGTC) is fe-S binding site B.

This sequence belongs to the anamorsin family. In terms of assembly, monomer. The cofactor is [2Fe-2S] cluster. [4Fe-4S] cluster serves as cofactor.

Its subcellular location is the cytoplasm. The protein resides in the mitochondrion intermembrane space. Functionally, component of the cytosolic iron-sulfur (Fe-S) protein assembly (CIA) machinery. Required for the maturation of extramitochondrial Fe-S proteins. Part of an electron transfer chain functioning in an early step of cytosolic Fe-S biogenesis, facilitating the de novo assembly of a [4Fe-4S] cluster on the cytosolic Fe-S scaffold complex. Electrons are transferred from NADPH via a FAD- and FMN-containing diflavin oxidoreductase. Together with the diflavin oxidoreductase, also required for the assembly of the diferric tyrosyl radical cofactor of ribonucleotide reductase (RNR), probably by providing electrons for reduction during radical cofactor maturation in the catalytic small subunit. The chain is Anamorsin homolog from Populus trichocarpa (Western balsam poplar).